We begin with the raw amino-acid sequence, 132 residues long: Cytochrome c' (132 aa).

Positions 10, 11, 65, 122, 125, and 126 each coordinate heme c.

Post-translationally, binds 1 heme c group covalently per subunit.

Cytochrome c' is the most widely occurring bacterial c-type cytochrome. Cytochromes c' are high-spin proteins and the heme has no sixth ligand. Their exact function is not known. This Halomonas halodenitrificans (strain ATCC 12084 / NCIMB 8669) (Paracoccus halodenitrificans) protein is Cytochrome c'.